Consider the following 677-residue polypeptide: Protein hook (677 aa).

The 118-residue stretch at 6–123 (NEMYYSLLEW…RLLQLVLGCA (118 aa)) folds into the Calponin-homology (CH) domain. 2 coiled-coil regions span residues 135–436 (EIMC…KCGH) and 478–588 (QTAL…AKEV).

The protein belongs to the hook family. In terms of assembly, homodimer. Interacts with microtubules via its N-terminus.

It is found in the cytoplasm. The protein resides in the cytoskeleton. Its subcellular location is the endosome. It localises to the synapse. Involved in endocytic trafficking by stabilizing organelles of the endocytic pathway. Probably acts as a cytoskeletal linker protein required to tether endosome vesicles to the cytoskeleton. Involved in modulation of endocytosis at stages required for down-regulation of membrane proteins that control synapse size. Not involved in synaptic vesicle recycling. Required in R7 cells for boss endocytosis into multivesicular bodies (MVBs). Has a role in regulating adult longevity. The protein is Protein hook of Drosophila pseudoobscura pseudoobscura (Fruit fly).